Reading from the N-terminus, the 373-residue chain is MSQNYYQILGVSKTASQADLKKAYLKLAKQYHPDTTDAKDAEKKFKAINAAYDVLKDEQKRAAYDRLGHDAFQNQQSRGGGGNHGGFHPDINDIFGDFFSDFMGGSRRSSRPTSAKVRGSDLKYNLTINLEEAFHGIEKNINFSSAVKCNTCHGSGSEKGETVTTCDACSGVGATRMQQGFFTIEQACHKCQGNGHIIKNPCKKCHGMGRYHKQRNLSVNIPAGVENGTRIRHTGEGEAGIRGGNSGDLYVDITIKPHDIYKVDGANLHCKLPISFVNAALGGEIEVPVIEGGKVSLTIPAGTQNGDQLRLRSKGMSKMRSTIRGDMLTHIHVEVPKNLSKRQRELLEEFKKESINEKENDGSFFNKMKSLWS.

Positions 4 to 68 (NYYQILGVSK…QKRAAYDRLG (65 aa)) constitute a J domain. The CR-type zinc finger occupies 136–214 (GIEKNINFSS…CHGMGRYHKQ (79 aa)). Residues cysteine 149, cysteine 152, cysteine 166, cysteine 169, cysteine 188, cysteine 191, cysteine 202, and cysteine 205 each coordinate Zn(2+). CXXCXGXG motif repeat units lie at residues 149 to 156 (CNTCHGSG), 166 to 173 (CDACSGVG), 188 to 195 (CHKCQGNG), and 202 to 209 (CKKCHGMG).

The protein belongs to the DnaJ family. Homodimer. It depends on Zn(2+) as a cofactor.

It is found in the cytoplasm. In terms of biological role, participates actively in the response to hyperosmotic and heat shock by preventing the aggregation of stress-denatured proteins and by disaggregating proteins, also in an autonomous, DnaK-independent fashion. Unfolded proteins bind initially to DnaJ; upon interaction with the DnaJ-bound protein, DnaK hydrolyzes its bound ATP, resulting in the formation of a stable complex. GrpE releases ADP from DnaK; ATP binding to DnaK triggers the release of the substrate protein, thus completing the reaction cycle. Several rounds of ATP-dependent interactions between DnaJ, DnaK and GrpE are required for fully efficient folding. Also involved, together with DnaK and GrpE, in the DNA replication of plasmids through activation of initiation proteins. The polypeptide is Chaperone protein DnaJ (Rickettsia rickettsii (strain Sheila Smith)).